The sequence spans 203 residues: Probable GTP-binding protein EngB (203 aa).

One can recognise an EngB-type G domain in the interval 24–199 (DGSEVAFAGR…HTVIETWLGL (176 aa)). Residues 32–39 (GRSNAGKS), 59–63 (GRTQQ), 77–80 (DLPG), 144–147 (TKAD), and 178–180 (FSS) contribute to the GTP site. Mg(2+) is bound by residues S39 and T61.

It belongs to the TRAFAC class TrmE-Era-EngA-EngB-Septin-like GTPase superfamily. EngB GTPase family. Requires Mg(2+) as cofactor.

Necessary for normal cell division and for the maintenance of normal septation. This is Probable GTP-binding protein EngB from Xylella fastidiosa (strain 9a5c).